The sequence spans 154 residues: MGLSDGEWQLVLKIWGKVEADLAGHGQDVLIRLFTAHPETLEKFDKFKNLKTADEMKASEDLKKHGVTVLTALGGILKKKGQHEAEIKPLAQSHATKHKIPVKYLEFISEAIIHVLQNKHSGDFGTDVQGAMSKALELFRNDIAAKYKELGFQG.

In terms of domain architecture, Globin spans glycine 2–lysine 148. Serine 4 bears the Phosphoserine mark. Residue histidine 65 coordinates nitrite. Histidine 65 contacts O2. Threonine 68 carries the post-translational modification Phosphothreonine. A heme b-binding site is contributed by histidine 94.

It belongs to the globin family. Monomeric.

The protein resides in the cytoplasm. Its subcellular location is the sarcoplasm. The catalysed reaction is Fe(III)-heme b-[protein] + nitric oxide + H2O = Fe(II)-heme b-[protein] + nitrite + 2 H(+). The enzyme catalyses H2O2 + AH2 = A + 2 H2O. In terms of biological role, monomeric heme protein which primary function is to store oxygen and facilitate its diffusion within muscle tissues. Reversibly binds oxygen through a pentacoordinated heme iron and enables its timely and efficient release as needed during periods of heightened demand. Depending on the oxidative conditions of tissues and cells, and in addition to its ability to bind oxygen, it also has a nitrite reductase activity whereby it regulates the production of bioactive nitric oxide. Under stress conditions, like hypoxia and anoxia, it also protects cells against reactive oxygen species thanks to its pseudoperoxidase activity. This is Myoglobin (MB) from Otolemur crassicaudatus (Brown greater galago).